An 852-amino-acid chain; its full sequence is Envelope glycoprotein gp160 (852 aa).

Positions 1–32 are cleaved as a signal peptide; it reads MRVKGIKKNYQHLWRWGGMMLLGILMICSATD. At 33-680 the chain is on the extracellular side; sequence KLWVTVYYGV…ITNWLWYIKI (648 aa). N-linked (GlcNAc...) asparagine; by host glycosylation occurs at Asn49. Cys54 and Cys74 form a disulfide bridge. N-linked (GlcNAc...) asparagine; by host glycans are attached at residues Asn88, Asn135, Asn138, Asn154, Asn158, Asn197, Asn234, Asn241, Asn262, Asn276, Asn289, Asn295, Asn301, Asn331, Asn354, and Asn360. Cystine bridges form between Cys119/Cys205, Cys126/Cys196, Cys131/Cys155, Cys218/Cys247, and Cys228/Cys239. Positions 131–154 are V1; it reads CHDFNATNATSNSGKMMEGGEMKN. The interval 155–196 is V2; that stretch reads CSFNITTSIRDKMQKEYALFYKLDIVPIDNDKTNTRYRLISC. The segment at 296-329 is V3; sequence CTRPNNNTRKRITMGPGRVYYTTGQIIGDIRRAH. An intrachain disulfide couples Cys296 to Cys330. Positions 362-372 are CD4-binding loop; sequence SSGGDPEIVMH. 2 cysteine pairs are disulfide-bonded: Cys376/Cys439 and Cys383/Cys412. Positions 383–412 are V4; it reads CNTTQLFNSTWYRNTTGNITEGNSPITLPC. 6 N-linked (GlcNAc...) asparagine; by host glycosylation sites follow: Asn384, Asn390, Asn396, Asn400, Asn442, and Asn456. V5 regions lie at residues 454-467 and 457-467; these read NNNE…FRPG and ETTDTEIFRPG. Residues 508-528 are fusion peptide; the sequence is AVGLGALFLGFLGAAGSTMGA. The tract at residues 570 to 588 is immunosuppression; it reads KQLQARVLAVERYLKDQQL. A disulfide bridge connects residues Cys594 and Cys600. Asn607, Asn612, Asn621, Asn633, and Asn670 each carry an N-linked (GlcNAc...) asparagine; by host glycan. Residues 629-663 adopt a coiled-coil conformation; that stretch reads REIDNYTNLIYSLIEDSQIQQEKNEKELLELDKWA. The interval 658-679 is MPER; binding to GalCer; the sequence is ELDKWASLWNWFNITNWLWYIK. Residues 681-701 traverse the membrane as a helical segment; that stretch reads FIMIVGGLIGLRIVFAVLSIV. Residues 702-852 are Cytoplasmic-facing; the sequence is NRVRQGYSPL…IRQGLERALQ (151 aa). Residues 708-711 carry the YXXL motif; contains endocytosis signal motif; sequence YSPL. The tract at residues 715–741 is disordered; sequence TRLPGRRGPDRPEGIEEEGGERDRDRS.

It belongs to the HIV-1 env protein family. In terms of assembly, the mature envelope protein (Env) consists of a homotrimer of non-covalently associated gp120-gp41 heterodimers. The resulting complex protrudes from the virus surface as a spike. There seems to be as few as 10 spikes on the average virion. Interacts with host CD4, CCR5 and CXCR4. Gp120 also interacts with the C-type lectins CD209/DC-SIGN and CLEC4M/DC-SIGNR (collectively referred to as DC-SIGN(R)). Gp120 and gp41 interact with GalCer. Gp120 interacts with host ITGA4/ITGB7 complex; on CD4+ T-cells, this interaction results in rapid activation of integrin ITGAL/LFA-1, which facilitates efficient cell-to-cell spreading of HIV-1. Gp120 interacts with cell-associated heparan sulfate; this interaction increases virus infectivity on permissive cells and may be involved in infection of CD4- cells. The mature envelope protein (Env) consists of a homotrimer of non-covalently associated gp120-gp41 heterodimers. The resulting complex protrudes from the virus surface as a spike. There seems to be as few as 10 spikes on the average virion. Highly glycosylated by host. The high number of glycan on the protein is reffered to as 'glycan shield' because it contributes to hide protein sequence from adaptive immune system. Post-translationally, palmitoylation of the transmembrane protein and of Env polyprotein (prior to its proteolytic cleavage) is essential for their association with host cell membrane lipid rafts. Palmitoylation is therefore required for envelope trafficking to classical lipid rafts, but not for viral replication. In terms of processing, specific enzymatic cleavages in vivo yield mature proteins. Envelope glycoproteins are synthesized as an inactive precursor that is heavily N-glycosylated and processed likely by host cell furin in the Golgi to yield the mature SU and TM proteins. The cleavage site between SU and TM requires the minimal sequence [KR]-X-[KR]-R. About 2 of the 9 disulfide bonds of gp41 are reduced by P4HB/PDI, following binding to CD4 receptor.

It is found in the virion membrane. The protein localises to the host cell membrane. Its subcellular location is the host endosome membrane. Its function is as follows. Oligomerizes in the host endoplasmic reticulum into predominantly trimers. In a second time, gp160 transits in the host Golgi, where glycosylation is completed. The precursor is then proteolytically cleaved in the trans-Golgi and thereby activated by cellular furin or furin-like proteases to produce gp120 and gp41. Attaches the virus to the host lymphoid cell by binding to the primary receptor CD4. This interaction induces a structural rearrangement creating a high affinity binding site for a chemokine coreceptor like CXCR4 and/or CCR5. Acts as a ligand for CD209/DC-SIGN and CLEC4M/DC-SIGNR, which are respectively found on dendritic cells (DCs), and on endothelial cells of liver sinusoids and lymph node sinuses. These interactions allow capture of viral particles at mucosal surfaces by these cells and subsequent transmission to permissive cells. HIV subverts the migration properties of dendritic cells to gain access to CD4+ T-cells in lymph nodes. Virus transmission to permissive T-cells occurs either in trans (without DCs infection, through viral capture and transmission), or in cis (following DCs productive infection, through the usual CD4-gp120 interaction), thereby inducing a robust infection. In trans infection, bound virions remain infectious over days and it is proposed that they are not degraded, but protected in non-lysosomal acidic organelles within the DCs close to the cell membrane thus contributing to the viral infectious potential during DCs' migration from the periphery to the lymphoid tissues. On arrival at lymphoid tissues, intact virions recycle back to DCs' cell surface allowing virus transmission to CD4+ T-cells. In terms of biological role, acts as a class I viral fusion protein. Under the current model, the protein has at least 3 conformational states: pre-fusion native state, pre-hairpin intermediate state, and post-fusion hairpin state. During fusion of viral and target intracellular membranes, the coiled coil regions (heptad repeats) assume a trimer-of-hairpins structure, positioning the fusion peptide in close proximity to the C-terminal region of the ectodomain. The formation of this structure appears to drive apposition and subsequent fusion of viral and target cell membranes. Complete fusion occurs in host cell endosomes and is dynamin-dependent, however some lipid transfer might occur at the plasma membrane. The virus undergoes clathrin-dependent internalization long before endosomal fusion, thus minimizing the surface exposure of conserved viral epitopes during fusion and reducing the efficacy of inhibitors targeting these epitopes. Membranes fusion leads to delivery of the nucleocapsid into the cytoplasm. This Human immunodeficiency virus type 1 group M subtype B (isolate BRVA) (HIV-1) protein is Envelope glycoprotein gp160.